The primary structure comprises 441 residues: tRNA-2-methylthio-N(6)-dimethylallyladenosine synthase (441 aa).

The MTTase N-terminal domain occupies 3-119; sequence KKVSIRTFGC…LPGLIRNAFQ (117 aa). The [4Fe-4S] cluster site is built by Cys-12, Cys-48, Cys-82, Cys-155, Cys-159, and Cys-162. The region spanning 141–371 is the Radical SAM core domain; that stretch reads RSGSISAFIP…IDLQSGISGE (231 aa). One can recognise a TRAM domain in the interval 374–437; sequence GNDVGSVQEV…QATLIGRCQD (64 aa).

This sequence belongs to the methylthiotransferase family. MiaB subfamily. In terms of assembly, monomer. [4Fe-4S] cluster serves as cofactor.

The protein localises to the cytoplasm. The catalysed reaction is N(6)-dimethylallyladenosine(37) in tRNA + (sulfur carrier)-SH + AH2 + 2 S-adenosyl-L-methionine = 2-methylsulfanyl-N(6)-dimethylallyladenosine(37) in tRNA + (sulfur carrier)-H + 5'-deoxyadenosine + L-methionine + A + S-adenosyl-L-homocysteine + 2 H(+). In terms of biological role, catalyzes the methylthiolation of N6-(dimethylallyl)adenosine (i(6)A), leading to the formation of 2-methylthio-N6-(dimethylallyl)adenosine (ms(2)i(6)A) at position 37 in tRNAs that read codons beginning with uridine. This chain is tRNA-2-methylthio-N(6)-dimethylallyladenosine synthase, found in Prosthecochloris aestuarii (strain DSM 271 / SK 413).